A 213-amino-acid polypeptide reads, in one-letter code: Small ribosomal subunit protein uS3 (213 aa).

The 69-residue stretch at 38–106 (IREYLENRLS…RVHINIVEIK (69 aa)) folds into the KH type-2 domain.

The protein belongs to the universal ribosomal protein uS3 family. As to quaternary structure, part of the 30S ribosomal subunit. Forms a tight complex with proteins S10 and S14.

Binds the lower part of the 30S subunit head. Binds mRNA in the 70S ribosome, positioning it for translation. This is Small ribosomal subunit protein uS3 from Oceanobacillus iheyensis (strain DSM 14371 / CIP 107618 / JCM 11309 / KCTC 3954 / HTE831).